We begin with the raw amino-acid sequence, 212 residues long: Large ribosomal subunit protein uL4 (212 aa).

Belongs to the universal ribosomal protein uL4 family. As to quaternary structure, part of the 50S ribosomal subunit.

In terms of biological role, one of the primary rRNA binding proteins, this protein initially binds near the 5'-end of the 23S rRNA. It is important during the early stages of 50S assembly. It makes multiple contacts with different domains of the 23S rRNA in the assembled 50S subunit and ribosome. Its function is as follows. Forms part of the polypeptide exit tunnel. The chain is Large ribosomal subunit protein uL4 from Caulobacter vibrioides (strain ATCC 19089 / CIP 103742 / CB 15) (Caulobacter crescentus).